We begin with the raw amino-acid sequence, 69 residues long: Beta-defensin 43 (69 aa).

An N-terminal signal peptide occupies residues methionine 1–serine 22. Intrachain disulfides connect cysteine 29–cysteine 56 and cysteine 35–cysteine 49.

The protein belongs to the beta-defensin family.

It is found in the secreted. Its function is as follows. Has bactericidal activity. In Mus musculus (Mouse), this protein is Beta-defensin 43 (Defb43).